The sequence spans 376 residues: UPF0754 membrane protein BLi01057/BL02871 (376 aa).

2 consecutive transmembrane segments (helical) span residues 1–21 (MYVF…GAVT) and 356–376 (YLGG…VILI).

This sequence belongs to the UPF0754 family.

Its subcellular location is the cell membrane. In Bacillus licheniformis (strain ATCC 14580 / DSM 13 / JCM 2505 / CCUG 7422 / NBRC 12200 / NCIMB 9375 / NCTC 10341 / NRRL NRS-1264 / Gibson 46), this protein is UPF0754 membrane protein BLi01057/BL02871.